A 98-amino-acid polypeptide reads, in one-letter code: ESAT-6-like protein EsxW (98 aa).

The protein belongs to the WXG100 family. CFP-10 subfamily. As to quaternary structure, forms a tight 1:1 complex with EsxV. The complex is destabilized at low pH. Unfolding of the proteins is required for dissociation of the complex and membrane binding.

The protein localises to the secreted. The polypeptide is ESAT-6-like protein EsxW (Mycobacterium tuberculosis (strain ATCC 25618 / H37Rv)).